Reading from the N-terminus, the 1516-residue chain is Lysine-specific demethylase 5C (1516 aa).

A JmjN domain is found at 14 to 55; that stretch reads CPVFEPSWAEFRDPLGYIAKIRPIAEKSGICKIRPPADWQPP. An ARID domain is found at 24 to 128; sequence FRDPLGYIAK…IVYPYEMYQS (105 aa). Over residues 142–151 the composition is skewed to basic and acidic residues; the sequence is NEEKDKEYKP. A disordered region spans residues 142 to 186; that stretch reads NEEKDKEYKPHSIPLRQSVQPSKFNSYGRRAKRLQPDPEPTEEDI. Over residues 156-166 the composition is skewed to polar residues; sequence LRQSVQPSKFN. Residues lysine 164, lysine 188, lysine 203, and lysine 233 each participate in a glycyl lysine isopeptide (Lys-Gly) (interchain with G-Cter in SUMO2) cross-link. Positions 216–262 are disordered; it reads LRKKDKEGPECPPTVVVKEESGGDVKVESTSPKTFLESKEELSHSPE. The segment covering 232 to 242 has biased composition (basic and acidic residues); sequence VKEESGGDVKV. Serine 246 bears the Phosphoserine mark. Lysine 254 is covalently cross-linked (Glycyl lysine isopeptide (Lys-Gly) (interchain with G-Cter in SUMO2)). Serine 260 and serine 276 each carry phosphoserine. A PHD-type 1 zinc finger spans residues 283–333; the sequence is SYVCRMCSRGDEDDKLLLCDGCDDNYHIFCLLPPLPEIPKGVWRCPKCVMA. Tyrosine 399 contacts 2-oxoglutarate. The JmjC domain maps to 427-593; it reads EYATSGWNLN…AGRQCIEHYR (167 aa). Fe cation contacts are provided by histidine 473 and glutamate 475. Positions 481, 483, and 491 each coordinate 2-oxoglutarate. Histidine 561 lines the Fe cation pocket. The segment at 666-718 adopts a C5HC2 zinc-finger fold; the sequence is CIKCKTTCFLSALACYDCPDGLVCLSHINDLCKCSSSRQYLRYRYTLDELPAM. Phosphoserine occurs at positions 852 and 856. Lysine 1086 participates in a covalent cross-link: Glycyl lysine isopeptide (Lys-Gly) (interchain with G-Cter in SUMO2). The PHD-type 2 zinc finger occupies 1144–1209; it reads TSICVCGQVP…KFLCPLCMRS (66 aa). Residues 1274-1305 form a disordered region; sequence LQAEPRPEEPPTYPSTPAFDPLREGSGKDMPK. The span at 1294–1304 shows a compositional bias: basic and acidic residues; the sequence is PLREGSGKDMP. Residue serine 1318 is modified to Phosphoserine. The disordered stretch occupies residues 1400–1516; sequence ERHGSRARGR…CPQQPPQQQL (117 aa). Residues 1404–1419 show a composition bias toward basic residues; sequence SRARGRALERRRRRKV. Over residues 1420–1437 the composition is skewed to basic and acidic residues; it reads DRGGEGDDPAREELEPKR. Residues 1444–1459 are compositionally biased toward acidic residues; it reads EAEEAHEEEELEEETG. 2 stretches are compositionally biased toward polar residues: residues 1471–1481 and 1489–1500; these read GSPSTQENQNG and SSGSSVPFSTLT.

This sequence belongs to the JARID1 histone demethylase family. Part of two distinct complexes, one containing E2F6, and the other containing REST. Interacts with ZMYND8. Requires Fe(2+) as cofactor.

The protein resides in the nucleus. It catalyses the reaction N(6),N(6),N(6)-trimethyl-L-lysyl(4)-[histone H3] + 3 2-oxoglutarate + 3 O2 = L-lysyl(4)-[histone H3] + 3 formaldehyde + 3 succinate + 3 CO2. Histone demethylase that specifically demethylates 'Lys-4' of histone H3, thereby playing a central role in histone code. Does not demethylate histone H3 'Lys-9', H3 'Lys-27', H3 'Lys-36', H3 'Lys-79' or H4 'Lys-20'. Demethylates trimethylated and dimethylated but not monomethylated H3 'Lys-4'. Participates in transcriptional repression of neuronal genes by recruiting histone deacetylases and REST at neuron-restrictive silencer elements. The polypeptide is Lysine-specific demethylase 5C (KDM5C) (Sus scrofa (Pig)).